The sequence spans 121 residues: Large ribosomal subunit protein bL12 (121 aa).

The protein belongs to the bacterial ribosomal protein bL12 family. As to quaternary structure, homodimer. Part of the ribosomal stalk of the 50S ribosomal subunit. Forms a multimeric L10(L12)X complex, where L10 forms an elongated spine to which 2 to 4 L12 dimers bind in a sequential fashion. Binds GTP-bound translation factors.

Functionally, forms part of the ribosomal stalk which helps the ribosome interact with GTP-bound translation factors. Is thus essential for accurate translation. The sequence is that of Large ribosomal subunit protein bL12 from Lactococcus lactis subsp. cremoris (strain MG1363).